The sequence spans 2059 residues: Desmoplakin-A (2059 aa).

The segment covering 1–11 (MSLSGSQTRLH) has biased composition (polar residues). Positions 1-25 (MSLSGSQTRLHQISRRSSSRPDLTA) are disordered. Coiled coils occupy residues 320–354 (IPQK…LLKN) and 397–453 (FKEA…VQTL). Residues 665–690 (EVSSGKTATGVSSGKTATGVSSGKTS) form a disordered region. Low complexity predominate over residues 671 to 690 (TATGVSSGKTATGVSSGKTS). 2 coiled-coil regions span residues 1062–1229 (MEEL…AELE) and 1261–1383 (LQQD…LQQR). Plectin repeat units follow at residues 1450 to 1488 (YLGG…TLEL), 1489 to 1526 (LEAQ…KDKL), 1564 to 1602 (LLEA…NEIL), 1666 to 1694 (IVDP…FLEL), 1847 to 1885 (LLEA…SVKL), and 1923 to 1961 (FLEF…AQKL). Residues 2008–2059 (KGISSPYNVSSGPSSRSGSRAGSRTGSRSGSRRGSVDYSSSSVSYTFFSSAS) are disordered. The span at 2011 to 2059 (SSPYNVSSGPSSRSGSRAGSRTGSRSGSRRGSVDYSSSSVSYTFFSSAS) shows a compositional bias: low complexity.

Belongs to the plakin or cytolinker family.

It is found in the cell junction. The protein localises to the desmosome. The protein resides in the cell membrane. Functionally, involved in the organization of desmosome cell-cell junctions. Of particular importance in cell adhesion in the skin and during cardiac development. May also play a role in the regulation of Wnt, TGF-beta and Hippo signaling pathways. This is Desmoplakin-A from Danio rerio (Zebrafish).